We begin with the raw amino-acid sequence, 623 residues long: Dictomallein-5 (623 aa).

A signal peptide spans Met-1 to Ser-21. Residues Pro-174–Tyr-435 form the Peptidase M66 domain. Residue His-327 participates in Zn(2+) binding. Residue Glu-328 is part of the active site. Residues His-331 and His-337 each contribute to the Zn(2+) site.

Belongs to the dictomallein family. It depends on Zn(2+) as a cofactor.

The protein resides in the secreted. The sequence is that of Dictomallein-5 (dtmlE) from Dictyostelium discoideum (Social amoeba).